We begin with the raw amino-acid sequence, 469 residues long: Histone chaperone rtt-106 (469 aa).

2 disordered regions span residues 54-73 (EEPATKRRRVEAQTSGPNGA) and 364-469 (MAEQ…EGEE). Composition is skewed to basic and acidic residues over residues 364 to 379 (MAEQRKAKKQLAENAK) and 402 to 415 (ELERAQKEEEQRLQ). Composition is skewed to acidic residues over residues 416 to 433 (DEEDEEEEDYDPGSEGES) and 440 to 469 (SEEEEEEEDGEGEGDEDDDEDMGEGLEGEE).

Belongs to the RTT106 family. Interacts with histones H3 and H4.

The protein localises to the nucleus. The protein resides in the chromosome. Histones H3 and H4 chaperone involved in the nucleosome formation and heterochromatin silencing. Required for the deposition of H3K56ac-carrying H3-H4 complex onto newly-replicated DNA. Plays a role in the transcriptional regulation of the cell-cycle dependent histone genes by creating a repressive structure at the core histone gene promoter. This is Histone chaperone rtt-106 (rtt-106) from Neurospora crassa (strain ATCC 24698 / 74-OR23-1A / CBS 708.71 / DSM 1257 / FGSC 987).